Here is a 187-residue protein sequence, read N- to C-terminus: MKKWLVTIAALWLAGCSSGEINKNYYQLPVVQSGTQSTASQGNRLLWVEQVTVPDYLAGNGVVYQTSDVKYVIANNNLWASPLDQQLRNTLVANLSTQLPGWVVASQPLGSAQDTLNVTVTEFNGRYDGKVIVSGEWLLNHQGQLIKRPFRLEGVQTQDGYDEMVKVLAGVWSQEAASIAQEIKRLP.

Positions 1–15 (MKKWLVTIAALWLAG) are cleaved as a signal peptide. Cys16 carries N-palmitoyl cysteine lipidation. Cys16 carries the S-diacylglycerol cysteine lipid modification.

As to quaternary structure, may form a complex composed of PqiA, PqiB and PqiC. Interacts with PqiB.

The protein localises to the cell outer membrane. Its function is as follows. Component of a transport pathway that contributes to membrane integrity. The sequence is that of Intermembrane transport lipoprotein PqiC from Escherichia coli (strain K12).